The primary structure comprises 216 residues: Chaperone protein TorD (216 aa).

It belongs to the TorD/DmsD family. TorD subfamily.

The protein resides in the cytoplasm. Functionally, involved in the biogenesis of TorA. Acts on TorA before the insertion of the molybdenum cofactor and, as a result, probably favors a conformation of the apoenzyme that is competent for acquiring the cofactor. The sequence is that of Chaperone protein TorD from Photobacterium profundum (strain SS9).